A 64-amino-acid chain; its full sequence is Large ribosomal subunit protein bL35 (64 aa).

The protein belongs to the bacterial ribosomal protein bL35 family.

This chain is Large ribosomal subunit protein bL35, found in Ectopseudomonas mendocina (strain ymp) (Pseudomonas mendocina).